The primary structure comprises 212 residues: MERLLVLARHGQSEWNLKKLFTGWRDPELTELGIDEARRAGRWLKSQGTQFDVAFTSNLRRAQNTCALILEEMGQAGLETIRNEALNERDYGDLSGLNKDDARERWGDAQVHEWRRSYDVPPPGGESLKDTAARVLPYYIQTILPRVMSGERVLVAAHGNSLRALVMVLDGMTTKTIASLEIATGIPLVYRLKADTTVESKTVLDKDIDQDN.

Residues 9–16, 22–23, Arg-61, 88–91, Lys-99, 115–116, and 159–160 contribute to the substrate site; these read RHGQSEWN, TG, ERDY, RR, and GN. Catalysis depends on His-10, which acts as the Tele-phosphohistidine intermediate. The active-site Proton donor/acceptor is the Glu-88.

The protein belongs to the phosphoglycerate mutase family. BPG-dependent PGAM subfamily. As to quaternary structure, homodimer.

It catalyses the reaction (2R)-2-phosphoglycerate = (2R)-3-phosphoglycerate. It participates in carbohydrate degradation; glycolysis; pyruvate from D-glyceraldehyde 3-phosphate: step 3/5. In terms of biological role, catalyzes the interconversion of 2-phosphoglycerate and 3-phosphoglycerate. In Methylorubrum populi (strain ATCC BAA-705 / NCIMB 13946 / BJ001) (Methylobacterium populi), this protein is 2,3-bisphosphoglycerate-dependent phosphoglycerate mutase.